Here is a 274-residue protein sequence, read N- to C-terminus: Penicillin-insensitive murein endopeptidase (274 aa).

The signal sequence occupies residues 1–19 (MNKTAIALLALLASSASLA). Cystine bridges form between Cys-44–Cys-265, Cys-187–Cys-235, and Cys-216–Cys-223. Zn(2+) contacts are provided by His-110, His-113, Asp-120, Asp-147, His-150, and His-211. The disordered stretch occupies residues 228–265 (LPPPGDGCGAELQSWFAPPKPGTTKPEKKTPPPLPPSC).

The protein belongs to the peptidase M74 family. As to quaternary structure, dimer. Zn(2+) serves as cofactor.

The protein resides in the periplasm. Its function is as follows. Murein endopeptidase that cleaves the D-alanyl-meso-2,6-diamino-pimelyl amide bond that connects peptidoglycan strands. Likely plays a role in the removal of murein from the sacculus. The polypeptide is Penicillin-insensitive murein endopeptidase (Shigella boydii serotype 18 (strain CDC 3083-94 / BS512)).